A 167-amino-acid polypeptide reads, in one-letter code: Phospholipase A2 imperatoxin-1 (167 aa).

3 residues coordinate Ca(2+): Trp-38, Gly-40, and Gly-42. Cystine bridges form between Cys-39–Cys-61, Cys-60–Cys-99, Cys-67–Cys-92, Cys-90–Cys-127, and Cys-132–Cys-144. Residue His-64 is part of the active site. Asp-65 is a Ca(2+) binding site. N-linked (GlcNAc...) asparagine glycosylation occurs at Asn-102. Positions 136 to 140 (RRLAR) are excised as a propeptide.

The protein belongs to the phospholipase A2 family. Group III subfamily. As to quaternary structure, heterodimer composed of a large subunit and a small subunit; disulfide-linked. The cofactor is Ca(2+). Expressed by the venom gland.

It localises to the secreted. It carries out the reaction a 1,2-diacyl-sn-glycero-3-phosphocholine + H2O = a 1-acyl-sn-glycero-3-phosphocholine + a fatty acid + H(+). In terms of biological role, phospholipase toxin, which may catalyze the calcium-dependent hydrolysis of the 2-acyl groups in 3-sn-phosphoglycerides. Inhibits both skeletal (RYR1) and cardiac (RYR2) ryanodine receptors (calcium release channels). Probably blocks ryanodine receptors by generating a lipid product. This Pandinus imperator (Emperor scorpion) protein is Phospholipase A2 imperatoxin-1.